A 157-amino-acid chain; its full sequence is Probable cyclic pyranopterin monophosphate synthase (157 aa).

Residues Met-75 to His-77 and Met-111 to Glu-112 contribute to the substrate site. Asp-126 is a catalytic residue.

The protein belongs to the MoaC family. As to quaternary structure, homohexamer; trimer of dimers.

It catalyses the reaction (8S)-3',8-cyclo-7,8-dihydroguanosine 5'-triphosphate = cyclic pyranopterin phosphate + diphosphate. It functions in the pathway cofactor biosynthesis; molybdopterin biosynthesis. Functionally, catalyzes the conversion of (8S)-3',8-cyclo-7,8-dihydroguanosine 5'-triphosphate to cyclic pyranopterin monophosphate (cPMP). This is Probable cyclic pyranopterin monophosphate synthase from Methanosarcina mazei (strain ATCC BAA-159 / DSM 3647 / Goe1 / Go1 / JCM 11833 / OCM 88) (Methanosarcina frisia).